A 108-amino-acid polypeptide reads, in one-letter code: ATP-dependent Clp protease adapter protein ClpS (108 aa).

The span at 1 to 15 (MPRESSPDSHHEHGV) shows a compositional bias: basic and acidic residues. Residues 1-24 (MPRESSPDSHHEHGVAVEPARPEV) are disordered.

It belongs to the ClpS family. As to quaternary structure, binds to the N-terminal domain of the chaperone ClpA.

Functionally, involved in the modulation of the specificity of the ClpAP-mediated ATP-dependent protein degradation. This chain is ATP-dependent Clp protease adapter protein ClpS, found in Stenotrophomonas maltophilia (strain R551-3).